The sequence spans 432 residues: Serine--tRNA ligase (432 aa).

239–241 (TSE) contributes to the L-serine binding site. 270-272 (RSE) lines the ATP pocket. Residue glutamate 293 participates in L-serine binding. 357–360 (EISS) lines the ATP pocket. Position 392 (serine 392) interacts with L-serine.

This sequence belongs to the class-II aminoacyl-tRNA synthetase family. Type-1 seryl-tRNA synthetase subfamily. In terms of assembly, homodimer. The tRNA molecule binds across the dimer.

The protein localises to the cytoplasm. It catalyses the reaction tRNA(Ser) + L-serine + ATP = L-seryl-tRNA(Ser) + AMP + diphosphate + H(+). It carries out the reaction tRNA(Sec) + L-serine + ATP = L-seryl-tRNA(Sec) + AMP + diphosphate + H(+). It participates in aminoacyl-tRNA biosynthesis; selenocysteinyl-tRNA(Sec) biosynthesis; L-seryl-tRNA(Sec) from L-serine and tRNA(Sec): step 1/1. Functionally, catalyzes the attachment of serine to tRNA(Ser). Is also able to aminoacylate tRNA(Sec) with serine, to form the misacylated tRNA L-seryl-tRNA(Sec), which will be further converted into selenocysteinyl-tRNA(Sec). The protein is Serine--tRNA ligase of Methylibium petroleiphilum (strain ATCC BAA-1232 / LMG 22953 / PM1).